Here is a 20-residue protein sequence, read N- to C-terminus: Pregnancy-associated glycoprotein 55h (20 aa).

Residue asparagine 4 is glycosylated (N-linked (GlcNAc...) asparagine).

Belongs to the peptidase A1 family. Highly expressed in the placenta between day 60 and day 100 of gestation.

It is found in the secreted. The protein resides in the extracellular space. The polypeptide is Pregnancy-associated glycoprotein 55h (Ovis aries (Sheep)).